The primary structure comprises 883 residues: Collagen, type I, alpha 1b (883 aa).

The interval 1 to 883 is disordered; that stretch reads QMSYVDHSKS…LGGSNDVELR (883 aa). Over residues 13 to 33 the composition is skewed to pro residues; sequence PPQPGPMGPMGPRGPPGPPGS. Low complexity-rich tracts occupy residues 34–57, 113–122, and 129–140; these read SGPQGFTGPPGEPGEPGASGAMGS, VPGVMGARGR, and SGARGNDGNTGP. Gly residues-rich tracts occupy residues 147–161 and 185–194; these read TGGETGPAGGRGNEG and GTDGGPGAKG. 3 stretches are compositionally biased toward low complexity: residues 195–205, 214–223, and 230–248; these read SPGAAGLAGAP, AQGAVGAPGP, and PGASGPKGEPGAKGEPGPA. Positions 285–297 are enriched in gly residues; the sequence is GADGGAGGKGAPG. Low complexity-rich tracts occupy residues 310–326 and 390–402; these read ATGESGSPGAPGAPGSK and VGAPGPSGVAGPA. Positions 415 to 424 are enriched in gly residues; that stretch reads GAPGLGGPTG. A compositionally biased stretch (low complexity) spans 425–444; that stretch reads ARGAPGPAGNDGAKGEPGAA. Composition is skewed to gly residues over residues 445–454 and 478–487; these read GAPGGLGAPG and GGKGGDGAPG. Positions 512–542 are enriched in low complexity; sequence AGPTGPRGETGPPGPAGFAGPPGADGQPGAK. The segment covering 564 to 573 has biased composition (gly residues); it reads GPKGGAGPPG. Low complexity-rich tracts occupy residues 574 to 584, 717 to 726, and 742 to 756; these read ATGFPGPAGRV, APGAVGPSGK, and SGPAGVRGPAGPAGA. The segment covering 757–771 has biased composition (basic and acidic residues); the sequence is KGDRGEAGEAGDRGH. The span at 792 to 812 shows a compositional bias: low complexity; the sequence is PAGASGPAGPRGPAGSNGAPG. The span at 821 to 836 shows a compositional bias: pro residues; sequence AGPPGPPGPAGPPGPP.

It belongs to the fibrillar collagen family.

This chain is Collagen, type I, alpha 1b, found in Epinephelus costae (Goldblotch grouper).